Here is a 439-residue protein sequence, read N- to C-terminus: Agmatine coumaroyltransferase-1 (439 aa).

Residues His152 and Asp385 each act as proton acceptor in the active site.

This sequence belongs to the plant acyltransferase family. Monomer.

The catalysed reaction is 4-coumaroyl-CoA + agmatine = N-(4-guanidinobutyl)-4-hydroxycinnamamide + CoA + H(+). Its activity is regulated as follows. Inhibited by DEPC. Completely inhibited by ZnSO(4), strongly inhibited by CuSO(4), partially inhibited by MnCl(2). Unaffected by MgCl(2) or CaCl(2). Functionally, involved in the synthesis of hordatines (antifungal hydroxycinnamoylagmatine derivatives). Specific for agmatine as the acyl acceptor, inactive towards tyramine and putrescine. Has activity with the acyl donors 4-coumaroyl-CoA, cinnamoyl-CoA, caffeoyl-CoA, feruloyl-CoA, and to a lesser extent sinapoyl-CoA. This chain is Agmatine coumaroyltransferase-1 (ACT-1), found in Hordeum vulgare (Barley).